The following is a 465-amino-acid chain: UDP-N-acetylmuramate--L-alanine ligase (465 aa).

Residue 112-118 participates in ATP binding; sequence GTHGKTT.

It belongs to the MurCDEF family.

It localises to the cytoplasm. It carries out the reaction UDP-N-acetyl-alpha-D-muramate + L-alanine + ATP = UDP-N-acetyl-alpha-D-muramoyl-L-alanine + ADP + phosphate + H(+). It participates in cell wall biogenesis; peptidoglycan biosynthesis. Its function is as follows. Cell wall formation. This is UDP-N-acetylmuramate--L-alanine ligase from Burkholderia cenocepacia (strain HI2424).